Consider the following 587-residue polypeptide: 5-aminolevulinate synthase, erythroid-specific, mitochondrial (587 aa).

A mitochondrion-targeting transit peptide spans 1 to 49; it reads MVTAAMLLQRCPVLIRSPTGLLGKMIKTHQFLFGIGRCPILATQGPSFS. R163 is a binding site for succinyl-CoA. Residues C258 and F259 each coordinate pyridoxal 5'-phosphate. S280 and K299 together coordinate succinyl-CoA. Residues S332, H360, and T388 each contribute to the pyridoxal 5'-phosphate site. K391 is an active-site residue. Residue K391 is modified to N6-(pyridoxal phosphate)lysine. Residues T420 and T421 each coordinate pyridoxal 5'-phosphate. T508 is a succinyl-CoA binding site.

The protein belongs to the class-II pyridoxal-phosphate-dependent aminotransferase family. Homodimer. Interacts with SUCLA2. The cofactor is pyridoxal 5'-phosphate.

The protein localises to the mitochondrion inner membrane. It carries out the reaction succinyl-CoA + glycine + H(+) = 5-aminolevulinate + CO2 + CoA. The protein operates within porphyrin-containing compound metabolism; protoporphyrin-IX biosynthesis; 5-aminolevulinate from glycine: step 1/1. In terms of biological role, catalyzes the pyridoxal 5'-phosphate (PLP)-dependent condensation of succinyl-CoA and glycine to form aminolevulinic acid (ALA), with CoA and CO2 as by-products. Contributes significantly to heme formation during erythropoiesis. This Bos taurus (Bovine) protein is 5-aminolevulinate synthase, erythroid-specific, mitochondrial (ALAS2).